The chain runs to 116 residues: Protein Rev (116 aa).

A phosphoserine; by host CK2 mark is found at Ser-5 and Ser-8. The homomultimerization stretch occupies residues 18–26; it reads LIKFLYQSN. A disordered region spans residues 23 to 49; the sequence is YQSNPPPNPEGTRQARRNRRRRWRERQ. Positions 34-50 match the Nuclear localization signal and RNA-binding (RRE) motif; that stretch reads TRQARRNRRRRWRERQR. A compositionally biased stretch (basic residues) spans 36–47; sequence QARRNRRRRWRE. Residues 73 to 84 carry the Nuclear export signal and binding to XPO1 motif; sequence LQLPPLERLTLD. Phosphoserine; by host occurs at positions 92 and 99.

Belongs to the HIV-1 REV protein family. As to quaternary structure, homomultimer; when bound to the RRE. Multimeric assembly is essential for activity and may involve XPO1. Binds to human KPNB1, XPO1, TNPO1, RANBP5 and IPO7. Interacts with the viral Integrase. Interacts with human KHDRBS1. Interacts with human NAP1; this interaction decreases Rev multimerization and stimulates its activity. Interacts with human DEAD-box helicases DDX3 and DDX24; these interactions may serve for viral RNA export to the cytoplasm and packaging, respectively. Interacts with human PSIP1; this interaction may inhibit HIV-1 DNA integration by promoting dissociation of the Integrase-LEDGF/p75 complex. In terms of processing, asymmetrically arginine dimethylated at one site by host PRMT6. Methylation impairs the RNA-binding activity and export of viral RNA from the nucleus to the cytoplasm. Post-translationally, phosphorylated by protein kinase CK2. Presence of, and maybe binding to the N-terminus of the regulatory beta subunit of CK2 is necessary for CK2-mediated Rev's phosphorylation.

The protein localises to the host nucleus. It localises to the host nucleolus. Its subcellular location is the host cytoplasm. Functionally, escorts unspliced or incompletely spliced viral pre-mRNAs (late transcripts) out of the nucleus of infected cells. These pre-mRNAs carry a recognition sequence called Rev responsive element (RRE) located in the env gene, that is not present in fully spliced viral mRNAs (early transcripts). This function is essential since most viral proteins are translated from unspliced or partially spliced pre-mRNAs which cannot exit the nucleus by the pathway used by fully processed cellular mRNAs. Rev itself is translated from a fully spliced mRNA that readily exits the nucleus. Rev's nuclear localization signal (NLS) binds directly to KPNB1/Importin beta-1 without previous binding to KPNA1/Importin alpha-1. KPNB1 binds to the GDP bound form of RAN (Ran-GDP) and targets Rev to the nucleus. In the nucleus, the conversion from Ran-GDP to Ran-GTP dissociates Rev from KPNB1 and allows Rev's binding to the RRE in viral pre-mRNAs. Rev multimerization on the RRE via cooperative assembly exposes its nuclear export signal (NES) to the surface. Rev can then form a complex with XPO1/CRM1 and Ran-GTP, leading to nuclear export of the complex. Conversion from Ran-GTP to Ran-GDP mediates dissociation of the Rev/RRE/XPO1/RAN complex, so that Rev can return to the nucleus for a subsequent round of export. Beside KPNB1, also seems to interact with TNPO1/Transportin-1, RANBP5/IPO5 and IPO7/RANBP7 for nuclear import. The nucleoporin-like HRB/RIP is an essential cofactor that probably indirectly interacts with Rev to release HIV RNAs from the perinuclear region to the cytoplasm. This chain is Protein Rev, found in Human immunodeficiency virus type 1 group M subtype B (isolate PCV12) (HIV-1).